The sequence spans 437 residues: MQVNVETISPVSKKVSIEIPADQVNSEIEKTYATIQKRAKIQGFRPGKAPLQLIKRTYADSMRDEVMRRFYETTLFKTLAEHKIEPIDAPTVECDILEEGTPFKYSALVEVMPEVLLTQYTGLEITKERYVFDPQKIEDEIARMRDGMAQLVPVEGDVAVEMGHMVTIDYAFSVDGFPEESTSAENAVVEVGAHRLLPEFEDQLVGMKCGESKHVTVTLPEAYRNPEVAGKEGAFMVTLNEIKRKELPELNDEFAQQFGEFETVEQLREKMTEYHQQHEQDRIEQEQRETVIQALIEKNPLDVPQSMVKRQVEQMLQNLKNRLKSRNMSMEMMGMDDDSFRERVRDSATDKVRGGLLLMALIEKEDFSVSDEEIEKRYEKLAGGNEEMLERIKEHYTSSPSVRHSLIAEIKEDKAVRFLLDNAVITETDPAETAAEA.

The PPIase FKBP-type domain occupies 163–248 (GHMVTIDYAF…LNEIKRKELP (86 aa)).

This sequence belongs to the FKBP-type PPIase family. Tig subfamily.

The protein resides in the cytoplasm. It catalyses the reaction [protein]-peptidylproline (omega=180) = [protein]-peptidylproline (omega=0). In terms of biological role, involved in protein export. Acts as a chaperone by maintaining the newly synthesized protein in an open conformation. Functions as a peptidyl-prolyl cis-trans isomerase. The polypeptide is Trigger factor (Pelobacter propionicus (strain DSM 2379 / NBRC 103807 / OttBd1)).